The primary structure comprises 278 residues: Thiazole synthase (278 aa).

The active-site Schiff-base intermediate with DXP is the Lys109. Residues Gly170, 197-198, and 219-220 contribute to the 1-deoxy-D-xylulose 5-phosphate site; these read AG and NT.

This sequence belongs to the ThiG family. Homotetramer. Forms heterodimers with either ThiH or ThiS.

The protein resides in the cytoplasm. The catalysed reaction is [ThiS sulfur-carrier protein]-C-terminal-Gly-aminoethanethioate + 2-iminoacetate + 1-deoxy-D-xylulose 5-phosphate = [ThiS sulfur-carrier protein]-C-terminal Gly-Gly + 2-[(2R,5Z)-2-carboxy-4-methylthiazol-5(2H)-ylidene]ethyl phosphate + 2 H2O + H(+). It participates in cofactor biosynthesis; thiamine diphosphate biosynthesis. Functionally, catalyzes the rearrangement of 1-deoxy-D-xylulose 5-phosphate (DXP) to produce the thiazole phosphate moiety of thiamine. Sulfur is provided by the thiocarboxylate moiety of the carrier protein ThiS. In vitro, sulfur can be provided by H(2)S. The chain is Thiazole synthase from Cupriavidus necator (strain ATCC 17699 / DSM 428 / KCTC 22496 / NCIMB 10442 / H16 / Stanier 337) (Ralstonia eutropha).